The chain runs to 347 residues: NADH-ubiquinone oxidoreductase chain 2 (347 aa).

11 helical membrane-spanning segments follow: residues 3-23 (PLIFTMILLTVMLGTAIVMTT), 25-45 (HWVMAWIGFEMNMLAIIPILM), 59-79 (YFLTQATASMLLMLAIVINLT), 96-116 (IIMTLAMAMKLGLAPFHFWVP), 122-142 (VQLSSGLILLTWQKLAPMSIL), 149-169 (INLDLLLLMSILSILVGGWGG), 178-198 (ILAYSSIAHMGWMTAIMVYNP), 201-221 (ALLNLAIYILLTTTTFVMLMV), 237-257 (MPLLTTAILTIMLSLGGLPPL), 274-294 (DSMITPTIMAVMTLLNLYFYM), and 326-346 (LSPLIILSTLILPLSPMLALL).

This sequence belongs to the complex I subunit 2 family. Core subunit of respiratory chain NADH dehydrogenase (Complex I) which is composed of 45 different subunits. Interacts with TMEM242.

It is found in the mitochondrion inner membrane. The enzyme catalyses a ubiquinone + NADH + 5 H(+)(in) = a ubiquinol + NAD(+) + 4 H(+)(out). Core subunit of the mitochondrial membrane respiratory chain NADH dehydrogenase (Complex I) which catalyzes electron transfer from NADH through the respiratory chain, using ubiquinone as an electron acceptor. Essential for the catalytic activity and assembly of complex I. The polypeptide is NADH-ubiquinone oxidoreductase chain 2 (Nyctimene aello (Broad-striped tube-nosed fruit bat)).